A 556-amino-acid polypeptide reads, in one-letter code: Optineurin (556 aa).

The disordered stretch occupies residues 1-33 (MSSKPQIRPAENGEHCRSKMENGMDSMAPPTLS). Residues 11-22 (ENGEHCRSKMEN) are compositionally biased toward basic and acidic residues. A coiled-coil region spans residues 38-164 (EEMVQQMKEL…SELQVKLNIA (127 aa)). The LIR signature appears at 168–173 (DSFVEI). A coiled-coil region spans residues 219-487 (VSQLLCCLRN…LLKEQQNLED (269 aa)). The disordered stretch occupies residues 245–274 (ERLSKMENETSNCLESGTQTNQEEESSEAI). Polar residues predominate over residues 253–265 (ETSNCLESGTQTN). The UBAN signature appears at 453-458 (DFHAER). Residues 496 to 524 (MQNRHGARAPDREHSPRLVQRGTGSQEWP) form a disordered region. The segment at 526 to 556 (QRNISIYSCPKCEEILPDLDTLQIHVMDCIN) adopts a CCHC NOA-type zinc-finger fold. 4 residues coordinate Zn(2+): Cys-534, Cys-537, His-550, and Cys-554.

In terms of assembly, binds to linear ubiquitin chains. Interacts with LC3 family members. As to expression, expressed in erythrocytes, skeletal muscle, heart, spleen and brain. Weakly expressed in lung and liver (at protein level).

It localises to the cytoplasm. The protein resides in the perinuclear region. The protein localises to the golgi apparatus. Its subcellular location is the trans-Golgi network. It is found in the cytoplasmic vesicle. It localises to the recycling endosome. The protein resides in the autophagosome. In terms of biological role, probably part of the TNF-alpha signaling pathway that can shift the equilibrium toward induction of cell death. May act by regulating membrane trafficking and cellular morphogenesis. May act as autophagy receptor that interacts directly with both the cargo to become degraded and an autophagy modifier of the MAP1 LC3 family. The protein is Optineurin (OPTN) of Gallus gallus (Chicken).